We begin with the raw amino-acid sequence, 145 residues long: Pleckstrin homology domain-containing protein 1 (145 aa).

The region spanning 26-127 (NPERSGWLTK…WINSIGRSIV (102 aa)) is the PH domain. The tract at residues 29-53 (RSGWLTKQGDYIKTWRRRWFVLKRG) is binds specifically PtdIns3P.

In terms of assembly, binds PtdIns3P. Ubiquitously expressed.

Its subcellular location is the cytoplasm. Binds specifically to phosphatidylinositol 3-phosphate (PtdIns3P), but not to other phosphoinositides. This is Pleckstrin homology domain-containing protein 1 (PH1) from Arabidopsis thaliana (Mouse-ear cress).